The chain runs to 123 residues: Large ribosomal subunit protein mL52 (123 aa).

The transit peptide at 1–23 directs the protein to the mitochondrion; that stretch reads MAALGTVLFTGVRRLHCSVAAWA. Basic and acidic residues predominate over residues 99–109; it reads QEEQRKQENAL. The disordered stretch occupies residues 99-123; sequence QEEQRKQENALKPKGASLKSPLPSQ.

This sequence belongs to the mitochondrion-specific ribosomal protein mL52 family. In terms of assembly, component of the mitochondrial large ribosomal subunit (mt-LSU). Mature mammalian 55S mitochondrial ribosomes consist of a small (28S) and a large (39S) subunit. The 28S small subunit contains a 12S ribosomal RNA (12S mt-rRNA) and 30 different proteins. The 39S large subunit contains a 16S rRNA (16S mt-rRNA), a copy of mitochondrial valine transfer RNA (mt-tRNA(Val)), which plays an integral structural role, and 52 different proteins. mL52 connects the central protuberance to the body of the ribosome.

Its subcellular location is the mitochondrion. The polypeptide is Large ribosomal subunit protein mL52 (MRPL52) (Homo sapiens (Human)).